The chain runs to 443 residues: Methyl-coenzyme M reductase II subunit beta (443 aa).

Y367 serves as a coordination point for coenzyme M. G369 provides a ligand contact to coenzyme B.

It belongs to the methyl-coenzyme M reductase beta subunit family. MCR is a hexamer of two alpha, two beta, and two gamma chains, forming a dimer of heterotrimers. It depends on coenzyme F430 as a cofactor.

The enzyme catalyses coenzyme B + methyl-coenzyme M = methane + coenzyme M-coenzyme B heterodisulfide. The protein operates within one-carbon metabolism; methyl-coenzyme M reduction; methane from methyl-coenzyme M: step 1/1. Component of the methyl-coenzyme M reductase (MCR) I that catalyzes the reductive cleavage of methyl-coenzyme M (CoM-S-CH3 or 2-(methylthio)ethanesulfonate) using coenzyme B (CoB or 7-mercaptoheptanoylthreonine phosphate) as reductant which results in the production of methane and the mixed heterodisulfide of CoB and CoM (CoM-S-S-CoB). This is the final step in methanogenesis. This is Methyl-coenzyme M reductase II subunit beta (mrtB) from Methanothermus fervidus (strain ATCC 43054 / DSM 2088 / JCM 10308 / V24 S).